Consider the following 574-residue polypeptide: Craniofacial development protein 2 (574 aa).

5 stretches are compositionally biased toward basic and acidic residues: residues 1–16 (MEEV…KAED), 23–37 (ECHE…KEDE), 45–55 (EQTKGIKRKAE), 86–111 (SEKE…KEDE), and 134–172 (TGEE…DRQQ). Disordered regions lie at residues 1-222 (MEEV…PAVD) and 488-574 (TRPF…SGVF). A compositionally biased stretch (polar residues) spans 199-208 (KTGTNASSKN). Positions 493–572 (GTNEADDTSE…AVPSLPAGSG (80 aa)) are hydrophilic. The span at 502–516 (EESKPSSEQKGKEKP) shows a compositional bias: basic and acidic residues. Positions 518–528 (ASVPSAVSSVP) are enriched in low complexity.

It localises to the cytoplasm. The protein resides in the nucleus. The sequence is that of Craniofacial development protein 2 (CFDP2) from Tragulus javanicus (Lesser Malay chevrotain).